A 177-amino-acid chain; its full sequence is CRIB domain-containing protein RIC8 (177 aa).

In terms of domain architecture, CRIB spans 17–30 (IGTPTDVKHVAHIG). Over residues 72-89 (STRSRDIPRLPKSSRERS) the composition is skewed to basic and acidic residues. Positions 72–177 (STRSRDIPRL…SSTSDAGYLT (106 aa)) are disordered. Residues 158–171 (GSQVESISDSSSTS) are compositionally biased toward low complexity.

Functionally, functions as a downstream effector of Rho-related GTP binding proteins of the 'Rho of Plants' (ROPs) family. Participates in the propagation of ROP GTPase signals in specific cellular responses. This is CRIB domain-containing protein RIC8 (RIC8) from Arabidopsis thaliana (Mouse-ear cress).